The sequence spans 427 residues: Glutamate-1-semialdehyde 2,1-aminomutase (427 aa).

Residue Lys-265 is modified to N6-(pyridoxal phosphate)lysine.

It belongs to the class-III pyridoxal-phosphate-dependent aminotransferase family. HemL subfamily. In terms of assembly, homodimer. The cofactor is pyridoxal 5'-phosphate.

The protein resides in the cytoplasm. It catalyses the reaction (S)-4-amino-5-oxopentanoate = 5-aminolevulinate. The protein operates within porphyrin-containing compound metabolism; protoporphyrin-IX biosynthesis; 5-aminolevulinate from L-glutamyl-tRNA(Glu): step 2/2. In Bordetella avium (strain 197N), this protein is Glutamate-1-semialdehyde 2,1-aminomutase.